We begin with the raw amino-acid sequence, 458 residues long: O-acetyltransferase dmxR13 (458 aa).

Residues 211 to 231 (ELARQISQPRPPPSSDGPPPP) form a disordered region. Pro residues predominate over residues 219 to 231 (PRPPPSSDGPPPP).

It belongs to the trichothecene 3-O-acetyltransferase family.

It functions in the pathway secondary metabolite biosynthesis. Its function is as follows. O-acetyltransferase; part of the gene cluster that mediates the biosynthesis of the dimeric xanthones cryptosporioptides. The pathway begins with the synthesis of atrochrysone thioester by the polyketide synthase dmx-nrPKS. The atrochrysone carboxyl ACP thioesterase dmxR1 then breaks the thioester bond and releases the atrochrysone carboxylic acid from dmx-nrPKS. Atrochrysone carboxylic acid is decarboxylated by the decarboxylase dmxR15, and oxidized by the anthrone oxygenase dmxR16 to yield emodin. Emodin is then reduced to emodin hydroquinone by the oxidoreductase dmxR7. A-ring reduction by the short chain dehydrogenase dmxR18, dehydration by the scytalone dehydratase-like protein dmxR17 and probable spontaneous re-oxidation, results in overall deoxygenation to chrysophanol. Baeyer-Villiger oxidation by the Baeyer-Villiger monooxygenase (BVMO) dmxR6 then yields monodictylactone in equilibrium with monodictyphenone. In the case of the cryptosporioptides biosynthesis, monodictylactone is reduced at C-12 to an alcohol (by the short chain dehydrogenases dmxR12 or dmxR8) and hydroxylated at C-5 by dmxR9, yielding the electron-rich aromatic which could eliminate H(2)O to form the ortho-quinonemethide, followed by tautomerisation to paraquinone and complete the formal reduction to produce the 10-methylgroup. Conjugate addition of C-4a-OH to the resulting paraquinone by the monooxygenase dmxR10 then gives cyclohexadienone, which is then reduced at C-5 by the short chain dehydrogenase dmxR3 to give the dihydroxanthone. The 6,7-epoxide in the cryptosporioptides could be introduced by the cytochrome P450 monooxygenase dmxL3. The highly reducing PKS dmxL2 manufactures butyrate, which is further carboxylated by dmxL1 to form ethylmalonate. It is not yet clear whether the carboxylation occurs while the butyrate is attached to the ACP of dmxL2, but this unusual fungal metabolite could then be esterified to O-5 by the O-acetyltransferase dmxR13. Finally, dimerization performed by dmxR5 gives the observed dimers cryptosporioptides A, B and C as the final products of the pathway. This chain is O-acetyltransferase dmxR13, found in Cryptosporiopsis sp. (strain 8999).